A 1044-amino-acid polypeptide reads, in one-letter code: Diacylglycerol lipase-alpha (1044 aa).

At methionine 1–alanine 22 the chain is on the cytoplasmic side. Residues isoleucine 23–leucine 43 traverse the membrane as a helical segment. Residues valine 44–arginine 60 lie on the Extracellular side of the membrane. A helical membrane pass occupies residues glycine 61–methionine 81. Over arginine 82 to arginine 101 the chain is Cytoplasmic. The helical transmembrane segment at leucine 102–tyrosine 122 threads the bilayer. Residues tyrosine 123–leucine 136 are Extracellular-facing. Asparagine 133 is a glycosylation site (N-linked (GlcNAc...) asparagine). A helical membrane pass occupies residues glycine 137–phenylalanine 157. Residues aspartate 158–arginine 1044 are Cytoplasmic-facing. Active-site charge relay system residues include serine 472 and aspartate 524. Residues serine 728, serine 730, serine 733, serine 744, serine 784, serine 786, serine 808, serine 810, serine 835, serine 849, and serine 954 each carry the phosphoserine modification. The tract at residues leucine 848 to glycine 905 is disordered. The segment at glutamine 1013–arginine 1044 is disordered. A Phosphothreonine modification is found at threonine 1025.

Belongs to the AB hydrolase superfamily. Lipase family. In terms of assembly, interacts (via C-terminal) with CAMK2A; leading to the phosphorylation and inhibition of DAGLA enzymatic activity. Interacts (via PPXXF motif) with HOMER1 and HOMER2; this interaction is required for DAGLA membrane localization. Ca(2+) is required as a cofactor. In terms of processing, phosphorylated at Ser-784 and Ser-810 by CAMK2A; phosphorylation by CAMK2A inhibits diacylglycerol lipase activity.

It is found in the cell membrane. Its subcellular location is the cell projection. The protein resides in the dendritic spine membrane. The protein localises to the postsynaptic density membrane. It localises to the early endosome membrane. The catalysed reaction is a 1,2-diacyl-sn-glycerol + H2O = a 2-acylglycerol + a fatty acid + H(+). The enzyme catalyses 1-octadecanoyl-2-(5Z,8Z,11Z,14Z-eicosatetraenoyl)-sn-glycerol + H2O = 2-(5Z,8Z,11Z,14Z-eicosatetraenoyl)-glycerol + octadecanoate + H(+). It carries out the reaction 1,2-di-(9Z-octadecenoyl)-sn-glycerol + H2O = 2-(9Z-octadecenoyl)-glycerol + (9Z)-octadecenoate + H(+). It catalyses the reaction 1-(9Z-octadecenoyl)-2-(5Z,8Z,11Z,14Z-eicosatetraenoyl)-sn-glycerol + H2O = 2-(5Z,8Z,11Z,14Z-eicosatetraenoyl)-glycerol + (9Z)-octadecenoate + H(+). The catalysed reaction is 1-(9Z-octadecenoyl)-2-octadecanoyl-sn-glycerol + H2O = 2-octadecanoylglycerol + (9Z)-octadecenoate + H(+). The enzyme catalyses 1-(9Z-octadecenoyl)-2-(9Z,12Z-octadecadienoyl)-sn-glycerol + H2O = 2-(9Z,12Z-octadecadienoyl)-glycerol + (9Z)-octadecenoate + H(+). It carries out the reaction 1-(9Z-octadecenoyl)-2-O-(5Z,8Z,11Z,14Z-eicosatetraenyl)-sn-glycerol + H2O = 2-O-(5Z,8Z,11Z,14Z)-eicosatetraenylglycerol + (9Z)-octadecenoate + H(+). With respect to regulation, inhibited by 1,2,3-triazole urea covalent inhibitors KT172, DH376 and DO34. Inhibited by p-hydroxy-mercuri-benzoate and HgCl(2), but not to PMSF. Also inhibited by RHC80267. Diacylglycerol lipase activity is inhibited by the phosphorylation of Ser-784 and Ser-810 by CAMK2A. Its function is as follows. Serine hydrolase that hydrolyzes arachidonic acid-esterified diacylglycerols (DAGs) to produce the principal endocannabinoid, 2-arachidonoylglycerol (2-AG). Preferentially hydrolyzes sn-1 fatty acids from diacylglycerols (DAG) that contain arachidonic acid (AA) esterified at the sn-2 position to biosynthesize 2-AG. Has negligible activity against other lipids including monoacylglycerols and phospholipids. Plays a key role in regulating 2-AG signaling in the CNS. Controls the activity of 2-AG as a retrograde messenger at neuronal synapses. Supports axonal growth during development and adult neurogenesis. Plays a role for eCB signaling in the physiological regulation of anxiety and depressive behaviors. Also regulates neuroinflammatory responses in the brain, in particular, LPS-induced microglial activation. This chain is Diacylglycerol lipase-alpha (Dagla), found in Rattus norvegicus (Rat).